Reading from the N-terminus, the 215-residue chain is AN1-type zinc finger protein C1271.05c (215 aa).

Polar residues predominate over residues 116 to 128 (IPSISKSNLTNPP). The disordered stretch occupies residues 116–138 (IPSISKSNLTNPPLESEKSSDKA). The segment at 144–193 (ATSRRRCCHPTCTRITLRLAGNCLHCNGRFCAAHRLMEDHDCVALFSLRK) adopts an AN1-type zinc-finger fold. Zn(2+)-binding residues include Cys-150, Cys-155, Cys-166, Cys-169, Cys-174, His-177, His-183, and Cys-185.

The protein localises to the cytoplasm. Its subcellular location is the nucleus. The polypeptide is AN1-type zinc finger protein C1271.05c (Schizosaccharomyces pombe (strain 972 / ATCC 24843) (Fission yeast)).